Here is a 584-residue protein sequence, read N- to C-terminus: AP-1-like transcription factor yap1 (584 aa).

Residues 23–179 (LAALSSNQPP…AFRERKEKHL (157 aa)) form a disordered region. Positions 35 to 42 (QQNDKQRS) match the Bipartite nuclear localization signal motif. Over residues 36–48 (QNDKQRSQAKTDP) the composition is skewed to basic and acidic residues. The span at 52–67 (PGNMSSGSFSMSPGFN) shows a compositional bias: low complexity. The Bipartite nuclear localization signal motif lies at 68–75 (KTHPGSGG). Residues 79–94 (GDDESPFLDFNPELDF) show a composition bias toward acidic residues. Composition is skewed to basic and acidic residues over residues 112–144 (SEEH…DKAA) and 170–179 (AFRERKEKHL). The bZIP domain maps to 154–217 (SEPTSKRKAQ…ERLQVELREY (64 aa)). The basic motif stretch occupies residues 159–180 (KRKAQNRAAQRAFRERKEKHLK). Positions 182-189 (LETKVDEL) are leucine-zipper. Residues 211–332 (QVELREYRKR…PSPKVPSVYN (122 aa)) are transcription activation 1. Disordered stretches follow at residues 267–379 (IFNG…TKLN) and 418–441 (RGKS…TPGP). The tract at residues 284–296 (SSPATSDSQVPGV) is n-CRD. Positions 300–309 (ETLNGSNNRG) are enriched in polar residues. A compositionally biased stretch (low complexity) spans 336–362 (SASSHDSSNSCSPSSSSDSHQSQMLSS). Composition is skewed to polar residues over residues 363-379 (NGTS…TKLN) and 422-437 (ESVS…NYEQ). Positions 377-480 (KLNDSVQNHH…SQDFGTFFDD (104 aa)) are transcription activation 2. Cystine bridges form between Cys531-Cys555, Cys531-Cys564, and Cys555-Cys564. Positions 531 to 564 (CTKIWDRLQSMEKFRNGEIDVDNLCSELRTKARC) are c-CRD. Positions 549 to 556 (IDVDNLCS) match the Nuclear export signal motif.

The protein belongs to the bZIP family. YAP subfamily. Depending on the oxidative stress inducing agent, yap1 can undergo two distinct conformational changes, both involving disulfide bond formation, and both masking the nuclear export signal, thus abolishing nuclear export.

It localises to the nucleus. The protein localises to the cytoplasm. In terms of biological role, transcription activator involved in oxidative stress response and redox homeostasis. Regulates the transcription of genes encoding antioxidant enzymes and components of the cellular thiol-reducing pathways. May be involved in antifungal resistance to voriconazole. The sequence is that of AP-1-like transcription factor yap1 from Aspergillus flavus (strain ATCC 200026 / FGSC A1120 / IAM 13836 / NRRL 3357 / JCM 12722 / SRRC 167).